A 347-amino-acid chain; its full sequence is MQFLDQAKIYLRSGAGGPGAVSFRHEKYIEYGGPDGGNGGKGGDIVFEAVPGLNTLIDFRYTQHFRAARGASGAGSNKTGAGAKDLVIHVPVGTQVLSEDKEEILHDFTKVGERIIFLKGGDGGRGNASYKSSTNRAPRQHGPGWPAQEAWVWLRLKLLADVGLVGLPNAGKSTFLKATTNAHPKIGNYPFTTLHPQLGVVRRHGQEFVLADIPGLIEGASEGIGIGDRFLGHIERCRILLHLIDASGEDPIAAWHEVQNELALYGAGLAEKPQLLALNKIDSVDEETCAELSQALEEASGQKVLLLSGATGQGLDPILDQLITMTGRAIEKAQESSAQTEKIWSPI.

Residues 1–159 form the Obg domain; sequence MQFLDQAKIY…AWVWLRLKLL (159 aa). A disordered region spans residues 124–144; it reads GRGNASYKSSTNRAPRQHGPG. Residues 160–327 enclose the OBG-type G domain; that stretch reads ADVGLVGLPN…ILDQLITMTG (168 aa). GTP contacts are provided by residues 166 to 173, 191 to 195, 212 to 215, 279 to 282, and 308 to 310; these read GLPNAGKS, FTTLH, DIPG, NKID, and SGA. Residues Ser-173 and Thr-193 each coordinate Mg(2+).

It belongs to the TRAFAC class OBG-HflX-like GTPase superfamily. OBG GTPase family. Monomer. Mg(2+) serves as cofactor.

It is found in the cytoplasm. In terms of biological role, an essential GTPase which binds GTP, GDP and possibly (p)ppGpp with moderate affinity, with high nucleotide exchange rates and a fairly low GTP hydrolysis rate. Plays a role in control of the cell cycle, stress response, ribosome biogenesis and in those bacteria that undergo differentiation, in morphogenesis control. This is GTPase Obg from Zymomonas mobilis subsp. mobilis (strain ATCC 31821 / ZM4 / CP4).